Reading from the N-terminus, the 685-residue chain is DEAD-box ATP-dependent RNA helicase 7 (685 aa).

The interval 1 to 89 (MPSISMMSDA…SELVQADDLK (89 aa)) is disordered. Basic and acidic residues-rich tracts occupy residues 22-42 (MKSE…SSSK) and 66-78 (AVDL…KSDN). The Q motif signature appears at 107–135 (NSLSNFRISKPLKDVLISKGIKALFPIQA). Residues 138 to 320 (FDNVIDGCDL…TRFLKSAKKT (183 aa)) form the Helicase ATP-binding domain. 151-158 (ARTGQGKT) serves as a coordination point for ATP. Positions 266-269 (DEAD) match the DEAD box motif. The Helicase C-terminal domain maps to 349-491 (DLIPDIIRCY…LSAPQPVDVA (143 aa)).

It belongs to the DEAD box helicase family. DDX21/DDX50 subfamily.

The protein localises to the nucleus. The enzyme catalyses ATP + H2O = ADP + phosphate + H(+). This is DEAD-box ATP-dependent RNA helicase 7 (RH7) from Spinacia oleracea (Spinach).